The chain runs to 138 residues: MRTLWIMAVLLVGVEGSVIQLGKMILQETGKNPVKYYGAYGCNCGPLGRRKPLDATDRCCYMHKCCYKKLTDSNPIKDRYSYSWENKAIVCKEKNPRLKEMCECDKAVAICFRENMRTYNKKERINTKIFCKKTPEPC.

The first 16 residues, 1 to 16 (MRTLWIMAVLLVGVEG), serve as a signal peptide directing secretion. 6 cysteine pairs are disulfide-bonded: cysteine 42–cysteine 131, cysteine 44–cysteine 60, cysteine 59–cysteine 111, cysteine 65–cysteine 138, cysteine 66–cysteine 104, and cysteine 91–cysteine 102. Residues 121 to 133 (KKERINTKIFCKK) form an important for membrane-damaging activities in eukaryotes and bacteria; heparin-binding region.

In terms of assembly, monomer. As to expression, expressed by the venom gland.

The protein resides in the secreted. Its function is as follows. Snake venom phospholipase A2 homolog that lacks catalytic activity. Induces local edema a few hours after injection in the hind foot. Is myotoxic. A model of myotoxic mechanism has been proposed: an apo Lys49-PLA2 is activated by the entrance of a hydrophobic molecule (e.g. fatty acid) at the hydrophobic channel of the protein leading to a reorientation of a monomer. This reorientation causes a transition between 'inactive' to 'active' states, causing alignment of C-terminal and membrane-docking sites (MDoS) side-by-side and putting the membrane-disruption sites (MDiS) in the same plane, exposed to solvent and in a symmetric position for both monomers. The MDoS region stabilizes the toxin on membrane by the interaction of charged residues with phospholipid head groups. Subsequently, the MDiS region destabilizes the membrane with penetration of hydrophobic residues. This insertion causes a disorganization of the membrane, allowing an uncontrolled influx of ions (i.e. calcium and sodium), and eventually triggering irreversible intracellular alterations and cell death. In Craspedocephalus puniceus (Flat-nosed pitviper), this protein is Basic phospholipase A2 homolog Tpu-K49a.